A 127-amino-acid chain; its full sequence is Gamma-synuclein (127 aa).

2 consecutive repeat copies span residues 20-30 (EKTKQGVTEAA) and 31-41 (EKTKEGVMYVG). The segment at 20 to 67 (EKTKQGVTEAAEKTKEGVMYVGAKTKEGVVQSVTSVAEKTKEQANAVS) is 4 X 11 AA tandem repeats of [EGSA]-K-T-K-[EQ]-[GQ]-V-X(4). A 3; approximate repeat occupies 42 to 56 (AKTKEGVVQSVTSVA). Copy 4 of the repeat occupies 57–67 (EKTKEQANAVS). S67, S72, and S124 each carry phosphoserine. The tract at residues 99–127 (ALKQPVPSQEDEAAKAEEQVAEETKSGGD) is disordered. The segment covering 110 to 127 (EAAKAEEQVAEETKSGGD) has biased composition (basic and acidic residues).

This sequence belongs to the synuclein family. In terms of assembly, may be a centrosome-associated protein. Interacts with MYOC; affects its secretion and its aggregation. Phosphorylated by BARK1 and GRK5. In terms of tissue distribution, predominantly expressed in retina (predominantly in outer nuclear layer, also in inner segment of photoreceptor cells, some individual cells located in the inner nuclear layer, inner plexiform layer and in nerve fiber layer). Also found in brain and heart.

The protein localises to the cytoplasm. Its subcellular location is the perinuclear region. It is found in the cytoskeleton. It localises to the microtubule organizing center. The protein resides in the centrosome. The protein localises to the spindle. Functionally, plays a role in neurofilament network integrity. May be involved in modulating axonal architecture during development and in the adult. In vitro, increases the susceptibility of neurofilament-H to calcium-dependent proteases. May also function in modulating the keratin network in skin. Activates the MAPK and Elk-1 signal transduction pathway. The polypeptide is Gamma-synuclein (SNCG) (Bos taurus (Bovine)).